The sequence spans 434 residues: MNHPDIAQRVYNHTWKLDPIIRSLLDTDFYKLLMLQMIWGLYPNVNVTFTLINRTKTIRLADDIDEGELRAQLDHALSLRFTKKEMIWLAGNTFYGRKQIFKPDFLHWLKNFQLPEYELTRKDGQYILHFHGPWSHSSMWEIPALAIISELRSRAAMKNLDRFALDVLYARAKAKMWSKVEQLKKLPDIKISDFGTRRRHSFLWQRWCVEALKEGIGDSFTGTSNVLLAMATDLEALGTNAHELPMVIAALTNNDNELCKAPYQVLQDWNRYYGGNLLIVLPDTFGTETFLRNAPDWVADWTGFRPDSAPPIEGGERIIQWWKEKGKDPREKLLIFSDALDVNTIEQTYHHFHGRVRMSFGWGTDLTNDFVGCAPQKIATFDALSLVCKVTHANGRPAVKLSDNPEKTIGDPREIQRYLNFFGNENFITRPINT.

Position 242 is a phosphohistidine; by autocatalysis (His-242).

It belongs to the NAPRTase family. Post-translationally, transiently phosphorylated on a His residue during the reaction cycle. Phosphorylation strongly increases the affinity for substrates and increases the rate of nicotinate D-ribonucleotide production. Dephosphorylation regenerates the low-affinity form of the enzyme, leading to product release.

The enzyme catalyses nicotinate + 5-phospho-alpha-D-ribose 1-diphosphate + ATP + H2O = nicotinate beta-D-ribonucleotide + ADP + phosphate + diphosphate. The protein operates within cofactor biosynthesis; NAD(+) biosynthesis; nicotinate D-ribonucleotide from nicotinate: step 1/1. Catalyzes the synthesis of beta-nicotinate D-ribonucleotide from nicotinate and 5-phospho-D-ribose 1-phosphate at the expense of ATP. In Bartonella quintana (strain Toulouse) (Rochalimaea quintana), this protein is Nicotinate phosphoribosyltransferase.